A 355-amino-acid polypeptide reads, in one-letter code: Meiotic coiled-coil protein 4 (355 aa).

The stretch at 298 to 338 forms a coiled coil; sequence QRLSRTEINKEIIEIEKLELEVVQFQMSIANLINTQVEVTN.

It is found in the cytoplasm. Has a role in meiosis. This Schizosaccharomyces pombe (strain 972 / ATCC 24843) (Fission yeast) protein is Meiotic coiled-coil protein 4 (mcp4).